We begin with the raw amino-acid sequence, 105 residues long: Large ribosomal subunit protein eL36 (105 aa).

It belongs to the eukaryotic ribosomal protein eL36 family. As to quaternary structure, component of the large ribosomal subunit.

It localises to the cytoplasm. It is found in the cytosol. Functionally, component of the large ribosomal subunit. The ribosome is a large ribonucleoprotein complex responsible for the synthesis of proteins in the cell. The chain is Large ribosomal subunit protein eL36 (rpl36) from Danio rerio (Zebrafish).